Consider the following 336-residue polypeptide: TBC1 domain family member 21 (336 aa).

Residues 57–265 (GLHPFVRTEA…RLWEVLLTGK (209 aa)) form the Rab-GAP TBC domain.

As to quaternary structure, interacts with ACTB. Interacts with ARMC12, TOMM20, DNAH7 and RAP1A. Interacts with RAB10. As to expression, expressed in round and elongated spermatids (at protein level). Expressed specifically in adult testis and very weakly in fetal brain.

It is found in the cytoplasmic vesicle. The protein resides in the secretory vesicle. It localises to the acrosome. The protein localises to the cytoplasm. Its subcellular location is the cytoskeleton. Its function is as follows. Acts as a GTPase-activating protein for Rab family protein(s). Essential for the establishment of male fertility, and is required for both the production of normal sperm number and sperm function. Plays an important role in the formation of intact mitochondria, outer dense fibers and axoneme within the sperm tail. Essential for sperm mitochondrial sheath formation and for the interactions of ARMC12 with VDAC2 and VDAC3. May be involved in acrosome formation and cytoskeletal reorganization during spermiogenesis, possibly by regulating RAB3A activity. The protein is TBC1 domain family member 21 (TBC1D21) of Homo sapiens (Human).